Here is a 512-residue protein sequence, read N- to C-terminus: Kelch repeat protein C2 (512 aa).

The 66-residue stretch at 2-67 folds into the BTB domain; sequence ESVIFSINGE…IRWKKINITI (66 aa). 6 Kelch repeats span residues 216-261, 262-307, 309-354, 356-403, 405-449, and 452-498; these read IKHN…LHNC, LYII…VNNG, LYVI…FVND, IYVM…EYDG, IYVI…SCGD, and LIIA…THKS.

The protein belongs to the poxviruses Kelch family.

This chain is Kelch repeat protein C2, found in Homo sapiens (Human).